The sequence spans 268 residues: Eukaryotic translation initiation factor 3 subunit J (268 aa).

3 disordered regions span residues 1–27 (MSWD…DDEF), 40–63 (DAEE…KVDK), and 217–249 (LAKV…KKDQ). Residues 47-58 (QKQKPKAAPKAA) are compositionally biased toward basic residues. A coiled-coil region spans residues 191 to 221 (IESIRQTVATLNVLIKEKERQERQARLAKVK).

This sequence belongs to the eIF-3 subunit J family. Component of the eukaryotic translation initiation factor 3 (eIF-3) complex.

It is found in the cytoplasm. In terms of biological role, component of the eukaryotic translation initiation factor 3 (eIF-3) complex, which is involved in protein synthesis of a specialized repertoire of mRNAs and, together with other initiation factors, stimulates binding of mRNA and methionyl-tRNAi to the 40S ribosome. The eIF-3 complex specifically targets and initiates translation of a subset of mRNAs involved in cell proliferation. This is Eukaryotic translation initiation factor 3 subunit J from Eremothecium gossypii (strain ATCC 10895 / CBS 109.51 / FGSC 9923 / NRRL Y-1056) (Yeast).